A 244-amino-acid chain; its full sequence is Cell division protein ZapD (244 aa).

The protein belongs to the ZapD family. As to quaternary structure, interacts with FtsZ.

It is found in the cytoplasm. Its function is as follows. Cell division factor that enhances FtsZ-ring assembly. Directly interacts with FtsZ and promotes bundling of FtsZ protofilaments, with a reduction in FtsZ GTPase activity. The polypeptide is Cell division protein ZapD (Shewanella oneidensis (strain ATCC 700550 / JCM 31522 / CIP 106686 / LMG 19005 / NCIMB 14063 / MR-1)).